Consider the following 539-residue polypeptide: Chaperone Ric-8A (539 aa).

The disordered stretch occupies residues 507–539 (MGITPSGNLAPMENAIRDMADERSSSDSDLGLD). Basic and acidic residues predominate over residues 521–532 (AIRDMADERSSS).

Belongs to the synembryn family.

The protein localises to the cytoplasm. Its subcellular location is the cell cortex. Functionally, chaperone that specifically binds and folds nascent G alpha proteins prior to G protein heterotrimer formation, promoting their stability and activity: folds GNAI1, GNAO1, GNA13 and GNAQ. Does not fold G(s) G-alpha proteins GNAS nor GNAL. Also acts as a guanine nucleotide exchange factor (GEF) for G alpha proteins by stimulating exchange of bound GDP for free GTP. This Gallus gallus (Chicken) protein is Chaperone Ric-8A (RIC8A).